The following is a 211-amino-acid chain: Minor capsid protein VP2 (211 aa).

It belongs to the norovirus VP2 family. As to quaternary structure, homooligomer. The portal-like structure consists in 12 copies of VP2. Interacts with capsid protein VP1.

The protein localises to the virion. The protein resides in the host cytoplasm. Minor structural protein that forms a portal-like structure at a unique three-fold axis of symmetry, following binding to the host receptor. The channel formed by VP2 may allow the delivery of the viral genome through the host endosomal membrane. In Homo sapiens (Human), this protein is Minor capsid protein VP2.